The sequence spans 213 residues: Orotate phosphoribosyltransferase (213 aa).

Lys-26 contributes to the 5-phospho-alpha-D-ribose 1-diphosphate binding site. 34–35 is an orotate binding site; it reads FF. Residues 72–73, Arg-99, Lys-100, Lys-103, His-105, and 124–132 contribute to the 5-phospho-alpha-D-ribose 1-diphosphate site; these read YK and DDVITAGTA. Positions 128 and 156 each coordinate orotate.

The protein belongs to the purine/pyrimidine phosphoribosyltransferase family. PyrE subfamily. As to quaternary structure, homodimer. The cofactor is Mg(2+).

The catalysed reaction is orotidine 5'-phosphate + diphosphate = orotate + 5-phospho-alpha-D-ribose 1-diphosphate. It participates in pyrimidine metabolism; UMP biosynthesis via de novo pathway; UMP from orotate: step 1/2. Its function is as follows. Catalyzes the transfer of a ribosyl phosphate group from 5-phosphoribose 1-diphosphate to orotate, leading to the formation of orotidine monophosphate (OMP). This chain is Orotate phosphoribosyltransferase, found in Pseudomonas putida (strain GB-1).